Here is a 537-residue protein sequence, read N- to C-terminus: 5,6-dihydroxyindole-2-carboxylic acid oxidase (537 aa).

Residues 1 to 24 form the signal peptide; that stretch reads MKSPTLLSLGYMFLVLLFFQQAWA. Residues 25-477 are Lumenal, melanosome-facing; the sequence is QFPRECATIE…WPSRSFSISE (453 aa). Intrachain disulfides connect Cys-30–Cys-41, Cys-42–Cys-65, Cys-56–Cys-99, Cys-101–Cys-110, and Cys-113–Cys-122. Asn-96 and Asn-104 each carry an N-linked (GlcNAc...) asparagine glycan. N-linked (GlcNAc...) asparagine glycosylation is present at Asn-181. Residues His-192, His-215, and His-224 each contribute to the Zn(2+) site. Cystine bridges form between Cys-258-Cys-261 and Cys-290-Cys-303. N-linked (GlcNAc...) asparagine glycosylation is found at Asn-304 and Asn-350. His-377 and His-381 together coordinate Zn(2+). A glycan (N-linked (GlcNAc...) asparagine) is linked at Asn-385. His-404 is a binding site for Zn(2+). A helical membrane pass occupies residues 478–501; the sequence is IVTIAVVAALSLVAVIFAGASCLI. The Cytoplasmic segment spans residues 502-537; sequence RARSNMDEANQPLLTDQYQHYIEEYEKIHNPNQSVV.

This sequence belongs to the tyrosinase family. In terms of assembly, monomer. Interacts with ATP7A. Interacts with SLC45A2. Requires Cu(2+) as cofactor. Zn(2+) is required as a cofactor. In terms of processing, glycosylated.

Its subcellular location is the melanosome membrane. It carries out the reaction 2 5,6-dihydroxyindole-2-carboxylate + O2 = 2 indole-5,6-quinone-2-carboxylate + 2 H2O. The protein operates within pigment biosynthesis; melanin biosynthesis. Plays a role in melanin biosynthesis. Catalyzes the oxidation of 5,6-dihydroxyindole-2-carboxylic acid (DHICA) into indole-5,6-quinone-2-carboxylic acid. May regulate or influence the type of melanin synthesized. Also to a lower extent, capable of hydroxylating tyrosine and producing melanin. The chain is 5,6-dihydroxyindole-2-carboxylic acid oxidase (TYRP1) from Bos taurus (Bovine).